The sequence spans 470 residues: MTMALKKVLAIVLAGGEGNRLMPLTADRAKPAVPFAGGYRLIDFALSNLVNSGYLKIVVLTQYKSHSLDRHISETWRMSTQLGRYVASVPAQQRVGKSWFLGSANAIYQSLNLIHDDAPDIVVVVGADHVYRMDFSQMVEQHIASGAKATVAAVRQPLNMANQFGVIEVDQNDPQKIAAFVEKPASTPGLAADPTQFLASMGNYVFNADALVEALHVDAERLDTKHDMGGDIIPYFVDQGEAGVYDFTLNDIPGATERDRTYWRDVGTIDSFYDAHMDLISPVPIFNLYNSEWPIYTRQSISPPAKFVRGENNTVGTALDSIVASGVVVSGGIVEGSVLSNDAYVAAGSRVQDSVLMDKVRVGEGAVIKRAILDKNVKVPAGAAIGLDPALDKARGYKVTESGITVLAKGQVVPEPGEAELALSAQHRRGLPEAVKAATHDDPDIRDSAEKVAAGIQSRVADAAAQGAAH.

Residues Gly165, 182 to 183 (EK), and Ser200 contribute to the alpha-D-glucose 1-phosphate site.

The protein belongs to the bacterial/plant glucose-1-phosphate adenylyltransferase family. In terms of assembly, homotetramer.

The enzyme catalyses alpha-D-glucose 1-phosphate + ATP + H(+) = ADP-alpha-D-glucose + diphosphate. The protein operates within glycan biosynthesis; glycogen biosynthesis. Functionally, involved in the biosynthesis of ADP-glucose, a building block required for the elongation reactions to produce glycogen. Catalyzes the reaction between ATP and alpha-D-glucose 1-phosphate (G1P) to produce pyrophosphate and ADP-Glc. The protein is Glucose-1-phosphate adenylyltransferase of Paenarthrobacter aurescens (strain TC1).